The sequence spans 269 residues: Cell cycle regulator CcrZ (269 aa).

F39, H76, W77, M78, and G80 together coordinate ATP. Positions 164-171 (HCDVNHNN) match the Brenner's motif [HXDhX3N] motif. D166 functions as the Proton acceptor in the catalytic mechanism. Positions 180–203 (LYLIDWDGAMIADPAMDLGPLLYH) match the APH motif.

The protein belongs to the aminoglycoside phosphotransferase family. As to quaternary structure, monomer in solution. Interacts with DnaA (via domains I (1-82) and III (111-326)). Interacts with DnaB. Interacts with FtsZ.

It is found in the cytoplasm. The enzyme catalyses D-ribose + ATP = D-ribose 5-phosphate + ADP + H(+). The catalysed reaction is 2-deoxy-D-ribose + ATP = 2-deoxy-D-ribose 5-phosphate + ADP + H(+). With respect to regulation, activated by D-ribose and 2-deoxy-D-ribose. Slightly activated by kanamycin and gentamicin. Plays a role in cell cycle regulation and chromosome integrity. Activates DnaA-dependent chromosomal DNA replication initiation ensuring that the chromosome is replicated at the right time during the cell cycle. May regulate replication initiation through phosphorylation of a possible second messenger or metabolite, and by interacting with replication initiation proteins. Has ATPase activity with D-ribose and 2-deoxy-D-ribose in vitro, but not with choline. Involved in DNA damage response. The sequence is that of Cell cycle regulator CcrZ from Bacillus subtilis (strain 168).